We begin with the raw amino-acid sequence, 104 residues long: LPVTNNMNKGDTKVMKCIVEVISDTLSKPNPLPISEECLETLRGDERIISILRHQNLLKELQEIAVQGANERTQQQRRTEDQELESLAAIEAELESVAHSLQAL.

A disulfide bond links C17 and C38.

This sequence belongs to the chromogranin/secretogranin protein family. As to quaternary structure, dimer.

The protein localises to the cytoplasmic vesicle. It is found in the secretory vesicle. It localises to the secreted. Chromogranin A probably has a paracrine role in the regulation of secretion or maturation. The polypeptide is Chromogranin-A (CHGA) (Struthio camelus (Common ostrich)).